Reading from the N-terminus, the 194-residue chain is Cytochrome b-245 light chain (194 aa).

Topologically, residues 2-7 (GQIEWA) are cytoplasmic. The helical transmembrane segment at 8–30 (MWANEQALASGLILVAGGIVATA) threads the bilayer. Residues 31 to 35 (GRFTQ) lie on the Extracellular side of the membrane. Residues 36-53 (WYFGTYAIAAGVLVCLLE) traverse the membrane as a helical segment. Residues 54–69 (YPRGSRAKGSTLERCG) lie on the Cytoplasmic side of the membrane. The stretch at 70–80 (QRYLTAVLKLL) is an intramembrane region. The Cytoplasmic portion of the chain corresponds to 81 to 86 (GPLSRN). The chain crosses the membrane as a helical span at residues 87 to 104 (YYFRAALHLALSVPAGFL). Position 105 (Leu105) is a topological domain, extracellular. Residues 106–126 (ATILGTVCLVIASIIYLLAAV) form a helical membrane-spanning segment. Residues 127-194 (RGEQWTPIEP…NPIPVTDEVV (68 aa)) are Cytoplasmic-facing. Residues 134–194 (IEPRPKERPQ…NPIPVTDEVV (61 aa)) are disordered. At Thr147 the chain carries Phosphothreonine. Lys149 participates in a covalent cross-link: Glycyl lysine isopeptide (Lys-Gly) (interchain with G-Cter in ubiquitin).

This sequence belongs to the p22phox family. In terms of assembly, component of the phagocyte NADPH oxidase core complex/cytochrome b558 complex, composed of CYBB (heavy chain (beta)) and CYBA (light chain (alpha)). Component of the phagocyte NADPH oxidase complex composed of an obligatory core heterodimer formed by the membrane proteins CYBA and CYBB and the cytosolic regulatory subunits NCF1/p47-phox, NCF2/p67-phox, NCF4/p40-phox and the small GTPase RAC1 or RAC2. Interacts with NCF1 (via SH3 domain). Interacts with SH3PXD2A. Interacts with DUOX1, DUOX2 and TPO. Interacts with NOX4; this interaction mediates superoxide generation. Interacts with calprotectin (S100A8/9). Interacts with GBP7. Interacts with NOXO1. Forms a heterodimer with NOX3 and is essential for activity and cell membrane localization of NOX3. Interacts with NOX1. Phosphorylation at Thr-147 enhances NADPH oxidase activity by promoting NCF1/p47-phox binding. Post-translationally, ubiquitinated at Lys-149 likely by RNF145.

The protein resides in the cell membrane. Functionally, subunit of NADPH oxidase complexes that is required for the NADPH oxidase activity that generates, in various cell types, superoxide from molecular oxygen utilizing NADPH as an electron donor. Subunit of the phagocyte NADPH oxidase complex that mediates the transfer of electrons from cytosolic NADPH to O2 to produce the superoxide anion (O2(-)). In the activated complex, electrons are first transferred from NADPH to flavin adenine dinucleotide (FAD) and subsequently transferred via two heme molecules to molecular oxygen, producing superoxide through an outer-sphere reaction. Activation of the NADPH oxidase complex is initiated by the assembly of cytosolic subunits of the NADPH oxidase complex with the core NADPH oxidase complex to form a complex at the plasma membrane or phagosomal membrane. This activation process is initiated by phosphorylation dependent binding of the cytosolic NCF1/p47-phox subunit to the C-terminus of CYBA/p22-phox. Aassociates with NOX3 to form a functional NADPH oxidase constitutively generating superoxide. In Oryctolagus cuniculus (Rabbit), this protein is Cytochrome b-245 light chain.